A 334-amino-acid polypeptide reads, in one-letter code: Protein-methionine-sulfoxide reductase catalytic subunit MsrP (334 aa).

Residues 1–44 constitute a signal peptide (tat-type signal); the sequence is MKKNQFLKESDVTAESVFFMKRRQVLKALGISAAAFSLPHAAHA. Residues Asn-88, 91 to 92, Cys-146, Thr-181, Asn-233, Arg-238, and 249 to 251 contribute to the Mo-molybdopterin site; these read YE and GIK.

Belongs to the MsrP family. In terms of assembly, heterodimer of a catalytic subunit (MsrP) and a heme-binding subunit (MsrQ). The cofactor is Mo-molybdopterin. Post-translationally, predicted to be exported by the Tat system. The position of the signal peptide cleavage has not been experimentally proven.

It localises to the periplasm. It catalyses the reaction L-methionyl-[protein] + a quinone + H2O = L-methionyl-(S)-S-oxide-[protein] + a quinol. The catalysed reaction is L-methionyl-[protein] + a quinone + H2O = L-methionyl-(R)-S-oxide-[protein] + a quinol. Functionally, part of the MsrPQ system that repairs oxidized periplasmic proteins containing methionine sulfoxide residues (Met-O), using respiratory chain electrons. Thus protects these proteins from oxidative-stress damage caused by reactive species of oxygen and chlorine generated by the host defense mechanisms. MsrPQ is essential for the maintenance of envelope integrity under bleach stress, rescuing a wide series of structurally unrelated periplasmic proteins from methionine oxidation, including the primary periplasmic chaperone SurA and the lipoprotein Pal. The catalytic subunit MsrP is non-stereospecific, being able to reduce both (R-) and (S-) diastereoisomers of methionine sulfoxide. The polypeptide is Protein-methionine-sulfoxide reductase catalytic subunit MsrP (Escherichia coli O7:K1 (strain IAI39 / ExPEC)).